A 278-amino-acid polypeptide reads, in one-letter code: 4-diphosphocytidyl-2-C-methyl-D-erythritol kinase (278 aa).

The active site involves lysine 9. 89–99 (PVASGIGGGSA) serves as a coordination point for ATP. Residue aspartate 128 is part of the active site.

The protein belongs to the GHMP kinase family. IspE subfamily.

It catalyses the reaction 4-CDP-2-C-methyl-D-erythritol + ATP = 4-CDP-2-C-methyl-D-erythritol 2-phosphate + ADP + H(+). Its pathway is isoprenoid biosynthesis; isopentenyl diphosphate biosynthesis via DXP pathway; isopentenyl diphosphate from 1-deoxy-D-xylulose 5-phosphate: step 3/6. Its function is as follows. Catalyzes the phosphorylation of the position 2 hydroxy group of 4-diphosphocytidyl-2C-methyl-D-erythritol. The sequence is that of 4-diphosphocytidyl-2-C-methyl-D-erythritol kinase from Cereibacter sphaeroides (strain KD131 / KCTC 12085) (Rhodobacter sphaeroides).